A 281-amino-acid chain; its full sequence is Very long chain fatty acid elongase 7 (281 aa).

Alanine 2 is modified (N-acetylalanine). At alanine 2–asparagine 27 the chain is on the lumenal side. A helical membrane pass occupies residues tryptophan 28–valine 48. Residues threonine 49–asparagine 72 lie on the Cytoplasmic side of the membrane. Residues phenylalanine 73–threonine 93 form a helical membrane-spanning segment. Topologically, residues glycine 94–histidine 115 are lumenal. Cysteine 99 and cysteine 231 form a disulfide bridge. Residues threonine 116 to leucine 136 form a helical membrane-spanning segment. Lysine 124, arginine 137, lysine 139, glutamine 142, and histidine 147 together coordinate 3-oxoeicosanoyl-CoA. Residues arginine 137–glutamine 142 lie on the Cytoplasmic side of the membrane. The chain crosses the membrane as a helical span at residues valine 143–valine 162. A HxxHH motif motif is present at residues histidine 147–histidine 151. Catalysis depends on histidine 150, which acts as the Nucleophile. Residues lysine 163–leucine 176 are Lumenal-facing. A helical transmembrane segment spans residues asparagine 177 to tyrosine 197. 4 residues coordinate 3-oxoeicosanoyl-CoA: tyrosine 187, lysine 204, threonine 208, and glutamine 211. The Cytoplasmic portion of the chain corresponds to glutamine 198–histidine 206. A helical membrane pass occupies residues leucine 207 to phenylalanine 227. Topologically, residues methionine 228–proline 236 are lumenal. The chain crosses the membrane as a helical span at residues valine 237–tryptophan 257. Residues tyrosine 258–histidine 281 are Cytoplasmic-facing. Position 266 (arginine 266) interacts with 3-oxoeicosanoyl-CoA. A Di-lysine motif motif is present at residues lysine 277 to histidine 281.

It belongs to the ELO family. ELOVL7 subfamily. In terms of assembly, homodimer. Interacts with TECR.

It is found in the endoplasmic reticulum membrane. It carries out the reaction a very-long-chain acyl-CoA + malonyl-CoA + H(+) = a very-long-chain 3-oxoacyl-CoA + CO2 + CoA. The enzyme catalyses eicosanoyl-CoA + malonyl-CoA + H(+) = 3-oxodocosanoyl-CoA + CO2 + CoA. The catalysed reaction is (5Z,8Z,11Z,14Z)-eicosatetraenoyl-CoA + malonyl-CoA + H(+) = (7Z,10Z,13Z,16Z)-3-oxodocosatetraenoyl-CoA + CO2 + CoA. It catalyses the reaction (6Z,9Z,12Z)-octadecatrienoyl-CoA + malonyl-CoA + H(+) = (8Z,11Z,14Z)-3-oxoeicosatrienoyl-CoA + CO2 + CoA. It carries out the reaction (9Z,12Z)-octadecadienoyl-CoA + malonyl-CoA + H(+) = (11Z,14Z)-3-oxoicosa-11,14-dienoyl-CoA + CO2 + CoA. The enzyme catalyses (9Z)-octadecenoyl-CoA + malonyl-CoA + H(+) = 3-oxo-(11Z)-eicosenoyl-CoA + CO2 + CoA. The catalysed reaction is octadecanoyl-CoA + malonyl-CoA + H(+) = 3-oxoeicosanoyl-CoA + CO2 + CoA. It catalyses the reaction hexadecanoyl-CoA + malonyl-CoA + H(+) = 3-oxooctadecanoyl-CoA + CO2 + CoA. It carries out the reaction (9Z,12Z,15Z)-octadecatrienoyl-CoA + malonyl-CoA + H(+) = (11Z,14Z,17Z)-3-oxoeicosatrienoyl-CoA + CO2 + CoA. The protein operates within lipid metabolism; fatty acid biosynthesis. In terms of biological role, catalyzes the first and rate-limiting reaction of the four reactions that constitute the long-chain fatty acids elongation cycle. This endoplasmic reticulum-bound enzymatic process allows the addition of 2 carbons to the chain of long- and very long-chain fatty acids (VLCFAs) per cycle. Condensing enzyme with higher activity toward C18 acyl-CoAs, especially C18:3(n-3) acyl-CoAs and C18:3(n-6)-CoAs. Also active toward C20:4-, C18:0-, C18:1-, C18:2- and C16:0-CoAs, and weakly toward C20:0-CoA. Little or no activity toward C22:0-, C24:0-, or C26:0-CoAs. May participate in the production of saturated and polyunsaturated VLCFAs of different chain lengths that are involved in multiple biological processes as precursors of membrane lipids and lipid mediators. The chain is Very long chain fatty acid elongase 7 from Rattus norvegicus (Rat).